A 358-amino-acid chain; its full sequence is Probable D-xylulose reductase A (358 aa).

Residues Cys-47, His-72, and Glu-73 each coordinate Zn(2+). An NAD(+)-binding site is contributed by 182-187; the sequence is GAGPVG.

This sequence belongs to the zinc-containing alcohol dehydrogenase family. Requires Zn(2+) as cofactor.

The catalysed reaction is xylitol + NAD(+) = D-xylulose + NADH + H(+). It functions in the pathway carbohydrate degradation; L-arabinose degradation via L-arabinitol; D-xylulose 5-phosphate from L-arabinose (fungal route): step 4/5. Xylitol dehydrogenase which catalyzes the conversion of xylitol to D-xylulose. Xylose is a major component of hemicelluloses such as xylan. Most fungi utilize D-xylose via three enzymatic reactions, xylose reductase (XR), xylitol dehydrogenase (XDH), and xylulokinase, to form xylulose 5-phosphate, which enters pentose phosphate pathway. The polypeptide is Probable D-xylulose reductase A (xdhA) (Aspergillus niger (strain ATCC MYA-4892 / CBS 513.88 / FGSC A1513)).